An 847-amino-acid polypeptide reads, in one-letter code: MAAEARVIDYMKGLPQSYQHRETYFEQFLEQNSERLVEEIDGPVVEKGLISDGEKEIIRHLNVQDKFTINGFRKSVKICHMVSLGATRQTKRTGTTELDFMGAGPWTLYPSSARALYSSKESTVHLVDEAQRRMIMSKCPTMAGPTSTGTYMAAIHERLSTPSDLRHLFTKMVLYLYDYTLAVVSKDNTMHTADDISFDLRPHLPSDALLATVINHDMVIDGDLFTPEQISLLCLAGQQYPSVWYAGEGNIYNSCNMVADDLVVVSSGRLTTDSAFTWGSPDKLYNMMWTIAQKLNGVSCLMYALESMRGKCKMMSDIVAKTDCREVNAMIPRSYCMSTAFGQIREKQIVVKMPGYFSTSIGMLSDLMYGMTFKAVASCVAETLGAMGTIVSSSTPRTNPTINGLMRDYGLQHTNAWDNFMLRNFEMVTRRPTQWDIGQHMKEYALALAEHVMLGYDIEMPSILLTIPALTAVNTAYGLTRGWYGGGSTLDMDKKQRKESTDALCAVGWMCGLRQCRPQVFRNRAGKKQVMVNAAERKLRAEAGDDCRIRDVEFWLEDTPGGRVDENEESAPNLYKTEFSGTKCAMVFNYEMGMWIEARQMDYDRLKRETFSGDLTKKERYTMSKVSAMPIHWGPPPNHKAKLEASLEHMKSISRGNAIVPTREPKHVRINSQSMAVVPKYVKDGVEEEKYVHYERPAIEEGDTIRFSEIDVPGDGSCGIHAMVKDLTVHGRLSPHEAAKATELFSTDTASKKFHDAAELAAQCQLWGMGMDLIDKGSNRVTRYGPEDSEYSITIIRDGGHFRAGLIGEGANEMTVEHLEQQTRAPEEFVRDVKSLGSLFGGSPILQ.

This is an uncharacterized protein from Penicillium chrysogenum virus (isolate Caston/2003) (PcV).